Consider the following 510-residue polypeptide: Probable cytosol aminopeptidase (510 aa).

Residues Lys272 and Asp277 each coordinate Mn(2+). Lys284 is an active-site residue. The Mn(2+) site is built by Asp296, Asp355, and Glu357. Residue Arg359 is part of the active site.

The protein belongs to the peptidase M17 family. It depends on Mn(2+) as a cofactor.

The protein localises to the cytoplasm. The enzyme catalyses Release of an N-terminal amino acid, Xaa-|-Yaa-, in which Xaa is preferably Leu, but may be other amino acids including Pro although not Arg or Lys, and Yaa may be Pro. Amino acid amides and methyl esters are also readily hydrolyzed, but rates on arylamides are exceedingly low.. It catalyses the reaction Release of an N-terminal amino acid, preferentially leucine, but not glutamic or aspartic acids.. In terms of biological role, presumably involved in the processing and regular turnover of intracellular proteins. Catalyzes the removal of unsubstituted N-terminal amino acids from various peptides. In Synechococcus sp. (strain JA-2-3B'a(2-13)) (Cyanobacteria bacterium Yellowstone B-Prime), this protein is Probable cytosol aminopeptidase.